The sequence spans 621 residues: Chaperone protein HtpG (621 aa).

Residues 1–341 form an a; substrate-binding region; sequence MSNQEYTFQT…SEDLPLNVSR (341 aa). The interval 342–547 is b; the sequence is EILQQNKILA…GDEQNAMMAN (206 aa). Positions 548–621 are c; sequence LMRQMGQNMP…RLNSVLLKAL (74 aa).

The protein belongs to the heat shock protein 90 family. As to quaternary structure, homodimer.

It is found in the cytoplasm. In terms of biological role, molecular chaperone. Has ATPase activity. This chain is Chaperone protein HtpG, found in Helicobacter acinonychis (strain Sheeba).